The chain runs to 221 residues: NADH-ubiquinone oxidoreductase chain 6 (221 aa).

The next 5 helical transmembrane spans lie at 18-38 (FVEY…IYVI), 44-64 (IVSV…LNII), 74-94 (IIVY…LINI), 107-127 (IPLT…MLPY), and 195-215 (IWLI…IVIT).

Belongs to the complex I subunit 6 family.

The protein localises to the mitochondrion membrane. It carries out the reaction a ubiquinone + NADH + 5 H(+)(in) = a ubiquinol + NAD(+) + 4 H(+)(out). In terms of biological role, core subunit of the mitochondrial membrane respiratory chain NADH dehydrogenase (Complex I) that is believed to belong to the minimal assembly required for catalysis. Complex I functions in the transfer of electrons from NADH to the respiratory chain. The immediate electron acceptor for the enzyme is believed to be ubiquinone. The protein is NADH-ubiquinone oxidoreductase chain 6 (ND6) of Podospora anserina (strain S / ATCC MYA-4624 / DSM 980 / FGSC 10383) (Pleurage anserina).